The primary structure comprises 161 residues: MSVPTTDLCDDFADELRVMNPMFRDFGGRVRFHGPVTTVKLFEDNSAVREALSEPGEGRVLVVDGGGSMRCALLGDNLAALGQKNGWAGVVVYGCVRDSAELATIDLGVKALNVHPLKSVKKGIGERDVTVTFAGITIQAGDWLYADEDGIVVARNSLVQA.

Substrate-binding positions include 75–78 and Arg97; that span reads GDNL. Position 98 (Asp98) interacts with a divalent metal cation.

It belongs to the class II aldolase/RraA-like family. Homotrimer. The cofactor is a divalent metal cation.

It carries out the reaction 4-hydroxy-4-methyl-2-oxoglutarate = 2 pyruvate. The catalysed reaction is oxaloacetate + H(+) = pyruvate + CO2. Its function is as follows. Catalyzes the aldol cleavage of 4-hydroxy-4-methyl-2-oxoglutarate (HMG) into 2 molecules of pyruvate. Also contains a secondary oxaloacetate (OAA) decarboxylase activity due to the common pyruvate enolate transition state formed following C-C bond cleavage in the retro-aldol and decarboxylation reactions. This chain is Putative 4-hydroxy-4-methyl-2-oxoglutarate aldolase, found in Alkalilimnicola ehrlichii (strain ATCC BAA-1101 / DSM 17681 / MLHE-1).